Consider the following 295-residue polypeptide: Nucleotide-binding protein PEPE_0450 (295 aa).

ATP is bound at residue 12-19 (GMSGAGKT). Residue 62–65 (DLRS) participates in GTP binding.

This sequence belongs to the RapZ-like family.

Its function is as follows. Displays ATPase and GTPase activities. In Pediococcus pentosaceus (strain ATCC 25745 / CCUG 21536 / LMG 10740 / 183-1w), this protein is Nucleotide-binding protein PEPE_0450.